The following is an 813-amino-acid chain: Leucine--tRNA ligase (813 aa).

Positions 41–51 (PYPSGTLHMGH) match the 'HIGH' region motif. The short motif at 575–579 (KMSKS) is the 'KMSKS' region element. Position 578 (lysine 578) interacts with ATP.

It belongs to the class-I aminoacyl-tRNA synthetase family.

It localises to the cytoplasm. It carries out the reaction tRNA(Leu) + L-leucine + ATP = L-leucyl-tRNA(Leu) + AMP + diphosphate. This is Leucine--tRNA ligase from Francisella tularensis subsp. tularensis (strain FSC 198).